Consider the following 575-residue polypeptide: Late gene expression regulator BcRF1 (575 aa).

Disordered stretches follow at residues 153–174 and 186–228; these read ELSPLRSRSQGGQTDVRSGPDP and DGAP…SSFQ. Residues 158–168 show a composition bias toward polar residues; sequence RSRSQGGQTDV.

This sequence belongs to the herpesviridae UL87 family.

In terms of biological role, DNA-binding protein that is required for viral late gene expression. Selectively recognizes late promoters by binding to a non-canonical TATA box element (TATT). Part of the viral pre-initiation complex (vPIC) that is responsible for the expression of vPIC-dependent late genes. vPIC is composed of at least BcRF1 that binds the viral TATT box, BDLF3.5, BDLF4, BFRF2, BGLF3, BGLF4 and BVLF1. The protein is Late gene expression regulator BcRF1 of Homo sapiens (Human).